The primary structure comprises 294 residues: N-acetylmuramic acid 6-phosphate etherase (294 aa).

Residues Val54–Lys217 enclose the SIS domain. Glu82 functions as the Proton donor in the catalytic mechanism. Glu113 is a catalytic residue.

Belongs to the GCKR-like family. MurNAc-6-P etherase subfamily. Homodimer.

The enzyme catalyses N-acetyl-D-muramate 6-phosphate + H2O = N-acetyl-D-glucosamine 6-phosphate + (R)-lactate. The protein operates within amino-sugar metabolism; N-acetylmuramate degradation. In terms of biological role, specifically catalyzes the cleavage of the D-lactyl ether substituent of MurNAc 6-phosphate, producing GlcNAc 6-phosphate and D-lactate. The polypeptide is N-acetylmuramic acid 6-phosphate etherase (Bacillus thuringiensis subsp. konkukian (strain 97-27)).